A 921-amino-acid chain; its full sequence is Protein translocase subunit SecA (921 aa).

Residues Gln87, 105–109 (GEGKT), and Asp515 contribute to the ATP site. The tract at residues 872-901 (DMEVAGSTGDRGAALDIQPAPVRSGPKIGR) is disordered. The Zn(2+) site is built by Cys905, Cys907, Cys916, and Cys917.

Belongs to the SecA family. Monomer and homodimer. Part of the essential Sec protein translocation apparatus which comprises SecA, SecYEG and auxiliary proteins SecDF-YajC and YidC. It depends on Zn(2+) as a cofactor.

The protein localises to the cell inner membrane. It localises to the cytoplasm. The catalysed reaction is ATP + H2O + cellular proteinSide 1 = ADP + phosphate + cellular proteinSide 2.. Part of the Sec protein translocase complex. Interacts with the SecYEG preprotein conducting channel. Has a central role in coupling the hydrolysis of ATP to the transfer of proteins into and across the cell membrane, serving both as a receptor for the preprotein-SecB complex and as an ATP-driven molecular motor driving the stepwise translocation of polypeptide chains across the membrane. This Polynucleobacter asymbioticus (strain DSM 18221 / CIP 109841 / QLW-P1DMWA-1) (Polynucleobacter necessarius subsp. asymbioticus) protein is Protein translocase subunit SecA.